Consider the following 529-residue polypeptide: Putative inorganic phosphate cotransporter (529 aa).

8 helical membrane-spanning segments follow: residues 37–57 (FATRYFVTFMLFLGMANAYVM), 110–130 (YILSSFFYGYVITQIPFGILA), 148–168 (VFAFLVPVAARGGGVWGLCAV), 202–222 (AVYAGAQFGTIISMPLSGLLA), 232–252 (SIFYVFGIVGTVWSIAFLIFV), 338–358 (LPYLAMWLFSMFISVVADWMI), 429–449 (FLMSITNCSANLAGLLAPIAA), and 466–486 (IVFFIAAFVYIICGTFYNIFG). The tract at residues 495 to 529 (NPEDDEQKPALQTTVTTSPARLSNGSTAPAAISSS) is disordered. A compositionally biased stretch (polar residues) spans 504–529 (ALQTTVTTSPARLSNGSTAPAAISSS).

It belongs to the major facilitator superfamily. Sodium/anion cotransporter family.

It is found in the membrane. Its function is as follows. May be an inorganic phosphate cotransporter. The chain is Putative inorganic phosphate cotransporter (Picot) from Drosophila melanogaster (Fruit fly).